A 2363-amino-acid polypeptide reads, in one-letter code: Highly reducing polyketide synthase cnsI (2363 aa).

One can recognise a Ketosynthase family 3 (KS3) domain in the interval 14–440 (PEPIAIIGMS…GSNAHAIVES (427 aa)). Residues Cys-187, His-322, and His-363 each act as for beta-ketoacyl synthase activity in the active site. A malonyl-CoA:ACP transacylase (MAT) domain region spans residues 546–854 (LAFVFTGQGA…FLQVLKSINA (309 aa)). Residue Ser-638 is the For malonyltransferase activity of the active site. Residues 938–1068 (HDLLGSPMDF…GTFTLHYDAR (131 aa)) form an N-terminal hotdog fold region. Residues 938–1224 (HDLLGSPMDF…RLDSIASDVS (287 aa)) are dehydratase (DH) domain. One can recognise a PKS/mFAS DH domain in the interval 938–1246 (HDLLGSPMDF…LGPVPMSKVP (309 aa)). The Proton acceptor; for dehydratase activity role is filled by His-970. The interval 1089-1246 (TAECETNRDA…LGPVPMSKVP (158 aa)) is C-terminal hotdog fold. Asp-1159 serves as the catalytic Proton donor; for dehydratase activity. The segment at 1669-1976 (GGQWVEDRQL…ARQTGISVAI (308 aa)) is enoylreductase (ER) domain. Positions 2001–2177 (TYLLAGGLGM…PGHSIDIGLV (177 aa)) are catalytic ketoreductase (KRc) domain. The Carrier domain maps to 2279-2357 (EDASYVVNQA…VLSEKIAAQS (79 aa)). Ser-2317 carries the post-translational modification O-(pantetheine 4'-phosphoryl)serine.

It functions in the pathway alkaloid biosynthesis. Functionally, highly reducing polyketide synthase; part of the gene cluster that mediates the biosynthesis of communesins, a prominent class of indole alkaloids with great potential as pharmaceuticals. Communesins are biosynthesized by the coupling of tryptamine and aurantioclavine, two building blocks derived from L-tryptophan. The L-tryptophan decarboxylase cnsB converts L-tryptophan to tryptamine, whereas the tryptophan dimethylallyltransferase cnsF converts L-tryptophan to 4-dimethylallyl tryptophan which is further transformed to aurantioclavine by the aurantioclavine synthase cnsA, probably aided by the catalase cnsD. The cytochrome P450 monooxygenase cnsC catalyzes the heterodimeric coupling between the two different indole moieties, tryptamine and aurantioclavine, to construct vicinal quaternary stereocenters and yield the heptacyclic communesin scaffold. The O-methyltransferase cnsE then methylates the communesin scaffold to produce communesin K, the simplest characterized communesin that contains the heptacyclic core. The dioxygenase cnsJ converts communesin K into communesin I. Acylation to introduce the hexadienyl group at position N16 of communesin I by the acyltransferase cnsK leads to the production of communesin B. The hexadienyl group is produced by the highly reducing polyketide synthase cnsI, before being hydrolytically removed from cnsI by the serine hydrolase cnsH, converted into hexadienyl-CoA by the CoA ligase cnsG, and then transferred to communesin I by cnsK. Surprisingly, cnsK may also be a promiscuous acyltransferase that can tolerate a range of acyl groups, including acetyl-, propionyl-, and butyryl-CoA, which lead to communesins A, G and H respectively. The roles of the alpha-ketoglutarate-dependent dioxygenases cnsM and cnsP have still to be determined. In Penicillium expansum (Blue mold rot fungus), this protein is Highly reducing polyketide synthase cnsI.